The primary structure comprises 530 residues: Tegument protein UL21 homolog (530 aa).

This sequence belongs to the alphaherpesvirinae UL21 protein family. In terms of assembly, interacts (via C-terminus) with UL16.

It localises to the virion tegument. It is found in the host cytoplasm. Its subcellular location is the host nucleus. May participate in DNA packaging/capsid maturation events. Promotes efficient incorporation of tegument proteins UL46, UL49, and US3 homologs into virions. May also play a role in capsid transport to the trans-Golgi network (TGN). The sequence is that of Tegument protein UL21 homolog from Equus caballus (Horse).